A 521-amino-acid polypeptide reads, in one-letter code: Probable protein kinase UbiB (521 aa).

Residues 119 to 497 (SFDRQPVASA…QKRTNRLLQS (379 aa)) form the Protein kinase domain. Residues 125–133 (VASASIAQV) and Lys151 contribute to the ATP site. Asp286 serves as the catalytic Proton acceptor. A helical membrane pass occupies residues 496–516 (QSLIYGGLGFVLGLLVMQLFV).

It belongs to the ABC1 family. UbiB subfamily.

The protein localises to the cell inner membrane. The protein operates within cofactor biosynthesis; ubiquinone biosynthesis [regulation]. In terms of biological role, is probably a protein kinase regulator of UbiI activity which is involved in aerobic coenzyme Q (ubiquinone) biosynthesis. This is Probable protein kinase UbiB from Acidovorax sp. (strain JS42).